Reading from the N-terminus, the 294-residue chain is Cytidine deaminase (294 aa).

CMP/dCMP-type deaminase domains lie at 48–168 and 186–294; these read DEDA…FGPK and LTGD…VLLG. Residue 89-91 coordinates substrate; that stretch reads NME. Zn(2+) is bound at residue histidine 102. Catalysis depends on glutamate 104, which acts as the Proton donor. Zn(2+) is bound by residues cysteine 129 and cysteine 132.

Belongs to the cytidine and deoxycytidylate deaminase family. In terms of assembly, homodimer. It depends on Zn(2+) as a cofactor.

It catalyses the reaction cytidine + H2O + H(+) = uridine + NH4(+). The enzyme catalyses 2'-deoxycytidine + H2O + H(+) = 2'-deoxyuridine + NH4(+). This enzyme scavenges exogenous and endogenous cytidine and 2'-deoxycytidine for UMP synthesis. The sequence is that of Cytidine deaminase from Salmonella agona (strain SL483).